A 106-amino-acid chain; its full sequence is Putative membrane protein insertion efficiency factor (106 aa).

This sequence belongs to the UPF0161 family.

The protein localises to the cell inner membrane. Could be involved in insertion of integral membrane proteins into the membrane. The sequence is that of Putative membrane protein insertion efficiency factor from Acinetobacter baumannii (strain SDF).